A 423-amino-acid polypeptide reads, in one-letter code: Amino acid transporter AVT1J (423 aa).

The next 11 helical transmembrane spans lie at 39 to 59 (CFHG…YALA), 63 to 83 (WLSL…AILI), 110 to 130 (VIVS…FLIL), 151 to 171 (FQGK…SVWL), 186 to 206 (FASG…GVGF), 219 to 239 (VATS…FPTL), 252 to 272 (VMII…VLGY), 297 to 317 (AIWT…TPII), 333 to 355 (ASGF…LLPF), 359 to 381 (LMSL…LCYL), and 390 to 410 (LGFE…VVIT).

This sequence belongs to the amino acid/polyamine transporter 2 family. Amino acid/auxin permease (AAAP) (TC 2.A.18.5) subfamily.

Its subcellular location is the membrane. This is Amino acid transporter AVT1J from Arabidopsis thaliana (Mouse-ear cress).